Reading from the N-terminus, the 621-residue chain is TOX high mobility group box family member 4 (621 aa).

Disordered regions lie at residues 153-227 (LGLS…QKPV) and 305-333 (LDPA…ASIE). A Phosphothreonine modification is found at Thr176. Phosphoserine is present on residues Ser178, Ser181, and Ser182. The span at 183–193 (LHEDGVEDFRR) shows a compositional bias: basic and acidic residues. Residues 208–218 (KQKAPKKRKKK) are compositionally biased toward basic residues. The Nuclear localization signal signature appears at 213–218 (KKRKKK). Positions 223 to 291 (PQKPVSAYAL…EYLKALAAYK (69 aa)) form a DNA-binding region, HMG box. Pro residues predominate over residues 307–319 (PAPPSQTPSPPPM). Thr313 carries the phosphothreonine modification. Ser315 is modified (phosphoserine). Residues 320-333 (ATVDPASPAPASIE) are compositionally biased toward low complexity. Arg481 carries the asymmetric dimethylarginine modification. The span at 510 to 525 (PTVESSPERPMNNSPE) shows a compositional bias: polar residues. The disordered stretch occupies residues 510-529 (PTVESSPERPMNNSPEAHTV). Phosphoserine occurs at positions 533, 550, 552, 560, 562, and 567.

Component of the PNUTS-PP1 phosphatase complex, composed of PPP1R10/PNUTS, TOX4, WDR82 and PPP1CA or PPP1CB or PPP1CC. Interacts with PPP1R10/PNUTS. Interacts with FOXO1 and CREB1 (increased by cAMP); FOXO1 and CREB1 are required for full induction of TOX4-dependent activity and the interactions are inhibited by insulin. As to expression, expressed in liver (at protein level).

The protein resides in the nucleus. It localises to the chromosome. Its activity is regulated as follows. In liver, recruited to target gene promoters following treatment with dexamethasone and cAMP. Binding is decreased in presence of insulin. Transcription factor that modulates cell fate reprogramming from the somatic state to the pluripotent and neuronal fate. In liver, controls the expression of hormone-regulated gluconeogenic genes such as G6PC1 and PCK1. This regulation is independent of the insulin receptor activation. Also acts as a regulatory component of protein phosphatase 1 (PP1) complexes. Component of the PNUTS-PP1 protein phosphatase complex, a PP1 complex that regulates RNA polymerase II transcription pause-release. PNUTS-PP1 also plays a role in the control of chromatin structure and cell cycle progression during the transition from mitosis into interphase. The sequence is that of TOX high mobility group box family member 4 from Homo sapiens (Human).